Reading from the N-terminus, the 595-residue chain is DNA primase (595 aa).

The CHC2-type zinc finger occupies 38-62; sequence CPFHQEKTPSFTVSNSKRFFYCFGC. The region spanning 250-332 is the Toprim domain; sequence NHSILVEGYF…EKKISFIRLP (83 aa). Glu256, Asp300, and Asp302 together coordinate Mg(2+).

Belongs to the DnaG primase family. Monomer. Interacts with DnaB. The cofactor is Zn(2+). Requires Mg(2+) as cofactor.

The catalysed reaction is ssDNA + n NTP = ssDNA/pppN(pN)n-1 hybrid + (n-1) diphosphate.. RNA polymerase that catalyzes the synthesis of short RNA molecules used as primers for DNA polymerase during DNA replication. The chain is DNA primase from Rickettsia conorii (strain ATCC VR-613 / Malish 7).